The chain runs to 406 residues: Succinylornithine transaminase (406 aa).

Position 252 is an N6-(pyridoxal phosphate)lysine (lysine 252).

Belongs to the class-III pyridoxal-phosphate-dependent aminotransferase family. AstC subfamily. It depends on pyridoxal 5'-phosphate as a cofactor.

It carries out the reaction N(2)-succinyl-L-ornithine + 2-oxoglutarate = N-succinyl-L-glutamate 5-semialdehyde + L-glutamate. The protein operates within amino-acid degradation; L-arginine degradation via AST pathway; L-glutamate and succinate from L-arginine: step 3/5. Catalyzes the transamination of N(2)-succinylornithine and alpha-ketoglutarate into N(2)-succinylglutamate semialdehyde and glutamate. Can also act as an acetylornithine aminotransferase. The polypeptide is Succinylornithine transaminase (Escherichia coli (strain SMS-3-5 / SECEC)).